The sequence spans 628 residues: Choline transporter-like protein 2 (628 aa).

The Cytoplasmic portion of the chain corresponds to 1–31; the sequence is MSSEDLQDHHEIGNEVIKKKGVYTKKKCQDC. The helical transmembrane segment at 32 to 52 threads the bilayer; that stretch reads FFLILFLLFWAGMIVVAAFGV. The Extracellular portion of the chain corresponds to 53–204; it reads KNGKPDRIVK…EILTDLTNSW (152 aa). 4 N-linked (GlcNAc...) asparagine glycosylation sites follow: Asn-82, Asn-118, Asn-146, and Asn-168. Residues 205–225 traverse the membrane as a helical segment; sequence RYLIYGALIAMGLGLTWIFLL. Arg-226 is a topological domain (cytoplasmic). Residues 227–247 traverse the membrane as a helical segment; that stretch reads FFAGFITWLTVFAAYACLGLL. At 248–282 the chain is on the extracellular side; that stretch reads TAQVYFQWQDSKDAYENTIPSQRLVMQEKNILALK. A helical transmembrane segment spans residues 283–303; it reads VIFIILCVVCGIFALILLALF. Topologically, residues 304–319 are cytoplasmic; the sequence is SRIRIAIRIIKECSRA. Residues 320-340 form a helical membrane-spanning segment; that stretch reads IGIMPSIFFFPIFIFLLLCGF. Residues 341-381 lie on the Extracellular side of the membrane; sequence TVYWVYIGVYLATAGSPTYDDQYRFTGYEADSKLQKIQIYH. A helical transmembrane segment spans residues 382-402; it reads FFGYLWTFAFILALNQTTIAG. At 403-432 the chain is on the cytoplasmic side; sequence AISSWYWVQDKKDTPFFPVWSSFFRVIRYH. Residues 433-453 form a helical membrane-spanning segment; it reads LGSIALGSLILAIVQFIRWVL. Over 454–530 the chain is Extracellular; sequence RFLEKKFKGK…RVAAVNLVSS (77 aa). Residues 531 to 551 traverse the membrane as a helical segment; the sequence is FLMFLGRVFITAATVGISLYL. Residues 552–559 are Cytoplasmic-facing; it reads LKEHENLS. A helical transmembrane segment spans residues 560–580; that stretch reads FYIIPVILIGFIAFAISTGFM. The Extracellular segment spans residues 581–628; it reads SVYDMSIDTMLLCFCEDCERNDGSPERPYYMSKSLRKFVDGKGRSKCC.

Belongs to the CTL (choline transporter-like) family.

It localises to the cell membrane. It is found in the mitochondrion outer membrane. The catalysed reaction is choline(out) + n H(+)(in) = choline(in) + n H(+)(out). The enzyme catalyses ethanolamine(out) + n H(+)(in) = ethanolamine(in) + n H(+)(out). Choline/H+ antiporter, mainly in mitochodria. Also acts as a low-affinity ethanolamine/H+ antiporter, regulating the supply of extracellular ethanolamine (Etn) for the CDP-Etn pathway, redistribute intracellular Etn and balance the CDP-Cho and CDP-Etn arms of the Kennedy pathway. The protein is Choline transporter-like protein 2 (slc44a2) of Dictyostelium discoideum (Social amoeba).